Reading from the N-terminus, the 428-residue chain is Dual-specificity RNA methyltransferase RlmN (428 aa).

The segment covering 1–17 has biased composition (basic and acidic residues); the sequence is MPLHRVEALGEPQDRTG. Residues 1–44 are disordered; the sequence is MPLHRVEALGEPQDRTGKTFSGRTNGPISSPLTDTERRMSIPQN. Positions 18–33 are enriched in polar residues; that stretch reads KTFSGRTNGPISSPLT. Glutamate 136 serves as the catalytic Proton acceptor. The Radical SAM core domain maps to 142 to 381; it reads EDDRGALCVS…APIRMPRGRD (240 aa). Cysteine 149 and cysteine 386 are disulfide-bonded. The [4Fe-4S] cluster site is built by cysteine 156, cysteine 160, and cysteine 163. S-adenosyl-L-methionine contacts are provided by residues 212–213, serine 244, 266–268, and asparagine 343; these read GE and SLH. Catalysis depends on cysteine 386, which acts as the S-methylcysteine intermediate.

Belongs to the radical SAM superfamily. RlmN family. It depends on [4Fe-4S] cluster as a cofactor.

The protein localises to the cytoplasm. It carries out the reaction adenosine(2503) in 23S rRNA + 2 reduced [2Fe-2S]-[ferredoxin] + 2 S-adenosyl-L-methionine = 2-methyladenosine(2503) in 23S rRNA + 5'-deoxyadenosine + L-methionine + 2 oxidized [2Fe-2S]-[ferredoxin] + S-adenosyl-L-homocysteine. The catalysed reaction is adenosine(37) in tRNA + 2 reduced [2Fe-2S]-[ferredoxin] + 2 S-adenosyl-L-methionine = 2-methyladenosine(37) in tRNA + 5'-deoxyadenosine + L-methionine + 2 oxidized [2Fe-2S]-[ferredoxin] + S-adenosyl-L-homocysteine. Its function is as follows. Specifically methylates position 2 of adenine 2503 in 23S rRNA and position 2 of adenine 37 in tRNAs. m2A2503 modification seems to play a crucial role in the proofreading step occurring at the peptidyl transferase center and thus would serve to optimize ribosomal fidelity. In Rhodospirillum rubrum (strain ATCC 11170 / ATH 1.1.1 / DSM 467 / LMG 4362 / NCIMB 8255 / S1), this protein is Dual-specificity RNA methyltransferase RlmN.